We begin with the raw amino-acid sequence, 942 residues long: MAYPLLVLVDGHALAYRAFFALRESGLRSSRGEPTYAVFGFAQILLTALAEYRPDYAAVAFDVGRTFRDDLYAEYKAGRAETPEEFYPQFERIKQLVQALNIPIYTAEGYEADDVIGTLARQATERGVDTIILTGDSDVLQLVNDHVRVALANPYGGKTSVTLYDLEQVRKRYDGLEPDQLADLRGLKGDTSDNIPGVRGIGEKGAIALLKQFRSLDALLEQIDAAPKRYQTLLREQAEAARFSRQLATIVTDVPVQLDLEAARIGVYDRSAVMALFQELEFGVSSNLIKKLPSVVQAPTLAELPADLPAAPLTTAPTQLSLFAGESEPAQPTAEPPPVTIVRDATALADLVSRLRNAPAFAFDTECTSLQPVASDLVGISIAIAPDTVCYIPVGHQSETQVPCGEVVTALAPFFANPQQPKFAHNAKFDMEVLAGAGIKVSGLAFDTMIAAAMLGKRQGLKDLAFYELKLPEPPTTIEDLIGRGNKQISFAEVPVEQAAPYAAADALYTLRLTERLQRQLEAEPALHDLYYRVELPLIEVLTDMELTGIRLDQEYLRELGRHFAQRIADLVERIYQQAGGPFNINSGQQLNDVLFGRLGIDPRAHGLSKLKSGGYSITAEVLEELSQLYPIAADILTYRQLTKLKSTYIDALPDLVNPRTGRIHTSYNQLGAATGRLSSNNPNLQNIPVRTEEGREIRRAFVAEPGWRFVAADYSQIELRVLAHMSGDENLIAAFQQGLDIHAATASRLFGVEPTAVDKNQRRVAKTVVFGVIYGISAFGLAQRLGIERDLARQLIDNLFAQFPGIRRYIDQTLEFGRQHGYVQTLFGRRRVMEDLRASGARRAAAEREAINAPIQGTAADLMKMAMVNVHRALREQGLRTRLLLQVHDELIAEAPEDEVEPAARLLRDVMSSVYRDLVVPLSVNLEVGPNWDEMSPLAMG.

Residues 177–269 form the 5'-3' exonuclease domain; the sequence is EPDQLADLRG…LEAARIGVYD (93 aa). One can recognise a 3'-5' exonuclease domain in the interval 340 to 522; the sequence is TIVRDATALA…LTERLQRQLE (183 aa).

The protein belongs to the DNA polymerase type-A family. As to quaternary structure, single-chain monomer with multiple functions.

It carries out the reaction DNA(n) + a 2'-deoxyribonucleoside 5'-triphosphate = DNA(n+1) + diphosphate. Its function is as follows. In addition to polymerase activity, this DNA polymerase exhibits 3'-5' and 5'-3' exonuclease activity. The sequence is that of DNA polymerase I (polA) from Chloroflexus aurantiacus (strain ATCC 29366 / DSM 635 / J-10-fl).